A 370-amino-acid chain; its full sequence is tRNA 2-selenouridine synthase (370 aa).

One can recognise a Rhodanese domain in the interval 12–136 (FLEDVPMMDT…MRNFLLDTTR (125 aa)). The active-site S-selanylcysteine intermediate is C95.

It belongs to the SelU family. In terms of assembly, monomer.

The enzyme catalyses 5-methylaminomethyl-2-thiouridine(34) in tRNA + selenophosphate + (2E)-geranyl diphosphate + H2O + H(+) = 5-methylaminomethyl-2-selenouridine(34) in tRNA + (2E)-thiogeraniol + phosphate + diphosphate. The catalysed reaction is 5-methylaminomethyl-2-thiouridine(34) in tRNA + (2E)-geranyl diphosphate = 5-methylaminomethyl-S-(2E)-geranyl-thiouridine(34) in tRNA + diphosphate. It catalyses the reaction 5-methylaminomethyl-S-(2E)-geranyl-thiouridine(34) in tRNA + selenophosphate + H(+) = 5-methylaminomethyl-2-(Se-phospho)selenouridine(34) in tRNA + (2E)-thiogeraniol. It carries out the reaction 5-methylaminomethyl-2-(Se-phospho)selenouridine(34) in tRNA + H2O = 5-methylaminomethyl-2-selenouridine(34) in tRNA + phosphate. In terms of biological role, involved in the post-transcriptional modification of the uridine at the wobble position (U34) of tRNA(Lys), tRNA(Glu) and tRNA(Gln). Catalyzes the conversion of 2-thiouridine (S2U-RNA) to 2-selenouridine (Se2U-RNA). Acts in a two-step process involving geranylation of 2-thiouridine (S2U) to S-geranyl-2-thiouridine (geS2U) and subsequent selenation of the latter derivative to 2-selenouridine (Se2U) in the tRNA chain. This Azotobacter vinelandii (strain DJ / ATCC BAA-1303) protein is tRNA 2-selenouridine synthase.